A 266-amino-acid polypeptide reads, in one-letter code: Large ribosomal subunit protein uL2m (266 aa).

The protein belongs to the universal ribosomal protein uL2 family.

It localises to the mitochondrion. The chain is Large ribosomal subunit protein uL2m (mrpl2) from Dictyostelium discoideum (Social amoeba).